Reading from the N-terminus, the 311-residue chain is Porphobilinogen deaminase (311 aa).

C243 is modified (S-(dipyrrolylmethanemethyl)cysteine).

Belongs to the HMBS family. In terms of assembly, monomer. Dipyrromethane is required as a cofactor.

It carries out the reaction 4 porphobilinogen + H2O = hydroxymethylbilane + 4 NH4(+). Its pathway is porphyrin-containing compound metabolism; protoporphyrin-IX biosynthesis; coproporphyrinogen-III from 5-aminolevulinate: step 2/4. Tetrapolymerization of the monopyrrole PBG into the hydroxymethylbilane pre-uroporphyrinogen in several discrete steps. The protein is Porphobilinogen deaminase of Aliivibrio fischeri (strain ATCC 700601 / ES114) (Vibrio fischeri).